Here is a 102-residue protein sequence, read N- to C-terminus: Large ribosomal subunit protein uL23 (102 aa).

This sequence belongs to the universal ribosomal protein uL23 family. In terms of assembly, part of the 50S ribosomal subunit. Contacts protein L29, and trigger factor when it is bound to the ribosome.

One of the early assembly proteins it binds 23S rRNA. One of the proteins that surrounds the polypeptide exit tunnel on the outside of the ribosome. Forms the main docking site for trigger factor binding to the ribosome. In Paramagnetospirillum magneticum (strain ATCC 700264 / AMB-1) (Magnetospirillum magneticum), this protein is Large ribosomal subunit protein uL23.